The sequence spans 567 residues: MKIAKGLVGLLILYKNVCQVLCKSGSSVKSGSPWSIKNDGKSIIHDTLNSSYSDIENLNSRVSPLLFDLTEKSDYMRFYRLNLFNKECRYNLDDNVACGSSACNVLVTDEQDVPEVWSSKSLGKLEGFMPELSRQIVETDRSVMEHVDKISQSCLLERLDDEAHQYCYVDNELDSGCVYVSLLENPERFTGYSGPHSTRIWEMIYNQCLPDSSAPTIDFPALFMQGPLAPPPKPQEQLLKERMDAWTLEQRVFYRVLSGMHSSISTHLCHGYLNQRNGVWGPNLQCFQEKVLNYPERLENLYFAYALMQRAIDKLYGHLDSLTFCHDSVLQDSEVRQKIAGLVSLIHNSPKMFDETMLFAGDPSISTALKEDFREHFKTVSALMDCVGCERCRLWGKIQTNGFGTALKILFEVSNIEDEVTNFDSRSFSLRLRRSEIVALINTFDRLSRSINFVDDFKQIYSEQHKPASFKRRVLRRIKQLLFSVTPVALHPFLQKTSSILVDLYFDFKAEWDNVMLGFRYVFASYLRFPRLFKFVLFSQESPFLNWTSHHLQRYIPKNWFPEVASV.

The first 22 residues, 1-22, serve as a signal peptide directing secretion; the sequence is MKIAKGLVGLLILYKNVCQVLC. An N-linked (GlcNAc...) asparagine glycan is attached at N49. Disulfide bonds link C88-C386, C98-C103, C154-C325, and C389-C392. FAD-binding residues include R188, T190, W201, S258, H261, and K290. Catalysis depends on C389, which acts as the Nucleophile. C392 is an active-site residue. N546 carries an N-linked (GlcNAc...) asparagine glycan.

The protein belongs to the EROs family. May function both as a monomer and a homodimer. The cofactor is FAD. Post-translationally, N-glycosylated.

It localises to the endoplasmic reticulum membrane. In terms of biological role, essential oxidoreductase that oxidizes proteins in the endoplasmic reticulum to produce disulfide bonds. Acts by oxidizing directly pdi1 isomerase through a direct disulfide exchange. Does not act as a direct oxidant of folding substrate, but relies on pdi1 to transfer oxidizing equivalent. Does not oxidize all pdi related proteins, suggesting that it can discriminate between pdi1 and related proteins. Its reoxidation probably involves electron transfer to molecular oxygen via FAD. Acts independently of glutathione. May be responsible for a significant proportion of reactive oxygen species (ROS) in the cell, thereby being a source of oxidative stress. The polypeptide is ERO1-like protein 2 (ero12) (Schizosaccharomyces pombe (strain 972 / ATCC 24843) (Fission yeast)).